A 667-amino-acid chain; its full sequence is Bifunctional polymyxin resistance protein ArnA (667 aa).

The tract at residues 1 to 304 is formyltransferase ArnAFT; sequence MKAIVFAYHD…EMGIVTDVRL (304 aa). His104 serves as the catalytic Proton donor; for formyltransferase activity. Residues Arg114 and 136-140 contribute to the (6R)-10-formyltetrahydrofolate site; that span reads VKKAD. Residues 314-667 are dehydrogenase ArnADH; that stretch reads RRTRVLILGV…TAAPKDELNA (354 aa). NAD(+) contacts are provided by residues Asp347 and 368–369; that span reads DI. Residues Ala393, Tyr398, and 432 to 433 each bind UDP-alpha-D-glucuronate; that span reads TS. The active-site Proton acceptor; for decarboxylase activity is the Glu434. UDP-alpha-D-glucuronate is bound by residues Arg460, Asn492, 526-535, and Tyr613; that span reads KLVDGGAQKR. Catalysis depends on Arg619, which acts as the Proton donor; for decarboxylase activity.

This sequence in the N-terminal section; belongs to the Fmt family. UDP-L-Ara4N formyltransferase subfamily. The protein in the C-terminal section; belongs to the NAD(P)-dependent epimerase/dehydratase family. UDP-glucuronic acid decarboxylase subfamily. Homohexamer, formed by a dimer of trimers.

The catalysed reaction is UDP-alpha-D-glucuronate + NAD(+) = UDP-beta-L-threo-pentopyranos-4-ulose + CO2 + NADH. It catalyses the reaction UDP-4-amino-4-deoxy-beta-L-arabinose + (6R)-10-formyltetrahydrofolate = UDP-4-deoxy-4-formamido-beta-L-arabinose + (6S)-5,6,7,8-tetrahydrofolate + H(+). Its pathway is nucleotide-sugar biosynthesis; UDP-4-deoxy-4-formamido-beta-L-arabinose biosynthesis; UDP-4-deoxy-4-formamido-beta-L-arabinose from UDP-alpha-D-glucuronate: step 1/3. It functions in the pathway nucleotide-sugar biosynthesis; UDP-4-deoxy-4-formamido-beta-L-arabinose biosynthesis; UDP-4-deoxy-4-formamido-beta-L-arabinose from UDP-alpha-D-glucuronate: step 3/3. The protein operates within bacterial outer membrane biogenesis; lipopolysaccharide biosynthesis. Its function is as follows. Bifunctional enzyme that catalyzes the oxidative decarboxylation of UDP-glucuronic acid (UDP-GlcUA) to UDP-4-keto-arabinose (UDP-Ara4O) and the addition of a formyl group to UDP-4-amino-4-deoxy-L-arabinose (UDP-L-Ara4N) to form UDP-L-4-formamido-arabinose (UDP-L-Ara4FN). The modified arabinose is attached to lipid A and is required for resistance to polymyxin and cationic antimicrobial peptides. In Yersinia pseudotuberculosis serotype IB (strain PB1/+), this protein is Bifunctional polymyxin resistance protein ArnA.